Here is an 888-residue protein sequence, read N- to C-terminus: Alanine--tRNA ligase (888 aa).

The Zn(2+) site is built by histidine 573, histidine 577, cysteine 676, and histidine 680.

It belongs to the class-II aminoacyl-tRNA synthetase family. The cofactor is Zn(2+).

It is found in the cytoplasm. The catalysed reaction is tRNA(Ala) + L-alanine + ATP = L-alanyl-tRNA(Ala) + AMP + diphosphate. In terms of biological role, catalyzes the attachment of alanine to tRNA(Ala) in a two-step reaction: alanine is first activated by ATP to form Ala-AMP and then transferred to the acceptor end of tRNA(Ala). Also edits incorrectly charged Ser-tRNA(Ala) and Gly-tRNA(Ala) via its editing domain. This Corynebacterium glutamicum (strain R) protein is Alanine--tRNA ligase.